The following is a 490-amino-acid chain: Selenium-binding protein 1 (490 aa).

Residue Ala-2 is modified to N-acetylalanine. Residues Cys-21 and Cys-22 each coordinate selenite.

The protein belongs to the selenium-binding protein family. As to quaternary structure, interacts with GRXS14 and GRXS16. Interacts with DALL3. Expressed in seedlings, roots, leaves, stems and flowers.

Functionally, binds cadmium and mediates lower sensitivity to stress requiring glutathione (GSH) for tolerance (e.g. cadmium, selenate, and hydrogen peroxide excess). Probably helps to detoxify cadmium potentially through direct binding. Binds selenium, cadmium, zinc and nickel in vitro. This chain is Selenium-binding protein 1, found in Arabidopsis thaliana (Mouse-ear cress).